The following is a 373-amino-acid chain: Alcohol dehydrogenase 2 (373 aa).

Zn(2+) is bound by residues cysteine 47, threonine 49, histidine 69, cysteine 99, cysteine 102, cysteine 105, cysteine 113, and cysteine 177. Residues threonine 49 and histidine 69 each coordinate an alcohol. Residue threonine 49 coordinates NAD(+). NAD(+)-binding positions include 202 to 207 (GLGAVG), aspartate 226, lysine 231, threonine 272, phenylalanine 316, and arginine 366.

This sequence belongs to the zinc-containing alcohol dehydrogenase family. In terms of assembly, homodimer. Requires Zn(2+) as cofactor.

It localises to the cytoplasm. The enzyme catalyses a primary alcohol + NAD(+) = an aldehyde + NADH + H(+). It catalyses the reaction a secondary alcohol + NAD(+) = a ketone + NADH + H(+). The sequence is that of Alcohol dehydrogenase 2 (ADH2) from Hordeum vulgare (Barley).